The chain runs to 880 residues: Leucine--tRNA ligase (880 aa).

Residues 46-56 (PYPSGALHMGH) carry the 'HIGH' region motif. Residues 638–642 (KMSKS) carry the 'KMSKS' region motif. Lys641 contributes to the ATP binding site.

It belongs to the class-I aminoacyl-tRNA synthetase family.

The protein localises to the cytoplasm. It carries out the reaction tRNA(Leu) + L-leucine + ATP = L-leucyl-tRNA(Leu) + AMP + diphosphate. In Xanthomonas oryzae pv. oryzae (strain KACC10331 / KXO85), this protein is Leucine--tRNA ligase.